A 360-amino-acid polypeptide reads, in one-letter code: Alpha-2-macroglobulin receptor-associated protein (360 aa).

The N-terminal stretch at 1-33 (MAPLRDRVSTLPRLQLLVLLLLPLLLVPQPIAG) is a signal peptide. 2 positions are modified to phosphoserine: S53 and S138. A coiled-coil region spans residues 222–302 (SKHSELKDRL…KHNHYQKQLE (81 aa)). The interval 240-356 (RLRKVSHQGY…DLSSRVSRAR (117 aa)) is LDL receptor binding. N271 is a glycosylation site (N-linked (GlcNAc...) asparagine). Residues 357-360 (HNEL) carry the Prevents secretion from ER motif.

This sequence belongs to the alpha-2-MRAP family. As to quaternary structure, interacts with the LRP1/alpha-2-macroglobulin receptor heavy and light chains; the interaction is transient and coincides with a reduction of ligand binding by the receptor. Interacts with LRP2/glycoprotein 330. Interacts with LRP1B; binding is followed by internalization and degradation. Interacts with LDLR. Interacts with SORL1. Interacts with LRP1; this interaction is followed by rapid internalization. N-glycosylated.

The protein localises to the rough endoplasmic reticulum lumen. The protein resides in the endoplasmic reticulum-Golgi intermediate compartment lumen. It localises to the golgi apparatus. It is found in the cis-Golgi network. Its subcellular location is the golgi apparatus lumen. The protein localises to the endosome lumen. The protein resides in the cell surface. Functionally, molecular chaperone for LDL receptor-related proteins that may regulate their ligand binding activity along the secretory pathway. The sequence is that of Alpha-2-macroglobulin receptor-associated protein (Lrpap1) from Rattus norvegicus (Rat).